Here is a 293-residue protein sequence, read N- to C-terminus: Glutamyl-Q tRNA(Asp) synthetase (293 aa).

L-glutamate contacts are provided by residues 4 to 8 (RYAPS) and E40. The 'HIGH' region motif lies at 7 to 17 (PSPSGDLHFGN). Positions 92, 94, 113, and 117 each coordinate Zn(2+). 2 residues coordinate L-glutamate: Y180 and R198. The 'KMSKS' region motif lies at 236-240 (RLAKR). K239 provides a ligand contact to ATP.

The protein belongs to the class-I aminoacyl-tRNA synthetase family. GluQ subfamily. Zn(2+) is required as a cofactor.

Catalyzes the tRNA-independent activation of glutamate in presence of ATP and the subsequent transfer of glutamate onto a tRNA(Asp). Glutamate is transferred on the 2-amino-5-(4,5-dihydroxy-2-cyclopenten-1-yl) moiety of the queuosine in the wobble position of the QUC anticodon. This is Glutamyl-Q tRNA(Asp) synthetase from Corynebacterium glutamicum (strain ATCC 13032 / DSM 20300 / JCM 1318 / BCRC 11384 / CCUG 27702 / LMG 3730 / NBRC 12168 / NCIMB 10025 / NRRL B-2784 / 534).